Reading from the N-terminus, the 504-residue chain is Cobyric acid synthase (504 aa).

The 197-residue stretch at 258 to 454 (EIEIAIIKLP…LHGIFENDEW (197 aa)) folds into the GATase cobBQ-type domain. C339 acts as the Nucleophile in catalysis. The active site involves H446.

Belongs to the CobB/CobQ family. CobQ subfamily.

It participates in cofactor biosynthesis; adenosylcobalamin biosynthesis. Catalyzes amidations at positions B, D, E, and G on adenosylcobyrinic A,C-diamide. NH(2) groups are provided by glutamine, and one molecule of ATP is hydrogenolyzed for each amidation. The chain is Cobyric acid synthase from Prochlorococcus marinus (strain NATL2A).